The primary structure comprises 60 residues: Protein translocase subunit SecE (60 aa).

A helical transmembrane segment spans residues 31-51 (VIVVSTVIFFLVFFYALDLGI).

The protein belongs to the SecE/SEC61-gamma family. Component of the Sec protein translocase complex. Heterotrimer consisting of SecY, SecE and SecG subunits. The heterotrimers can form oligomers, although 1 heterotrimer is thought to be able to translocate proteins. Interacts with the ribosome. Interacts with SecDF, and other proteins may be involved. Interacts with SecA.

Its subcellular location is the cell membrane. Essential subunit of the Sec protein translocation channel SecYEG. Clamps together the 2 halves of SecY. May contact the channel plug during translocation. The polypeptide is Protein translocase subunit SecE (Staphylococcus aureus (strain Mu50 / ATCC 700699)).